Consider the following 243-residue polypeptide: Probable fructoselysine utilization operon transcriptional repressor (243 aa).

Residues 10–78 (QLLYATVRQR…QGKGTFVQSQ (69 aa)) enclose the HTH gntR-type domain. Positions 38-57 (ENELCTQYNVSRITIRKAIS) form a DNA-binding region, H-T-H motif.

The protein operates within carbohydrate metabolism; fructoselysine degradation [regulation]. In terms of biological role, may regulate the transcription of the frlABCDR operon, involved in the utilization of fructoselysine and psicoselysine. This Shigella flexneri protein is Probable fructoselysine utilization operon transcriptional repressor (frlR).